The following is a 511-amino-acid chain: GMP synthase [glutamine-hydrolyzing] (511 aa).

The Glutamine amidotransferase type-1 domain occupies 6–196 (LVLVLDFGSQ…VFDVCGCTGD (191 aa)). The active-site Nucleophile is Cys83. Catalysis depends on residues His170 and Glu172. One can recognise a GMPS ATP-PPase domain in the interval 197–386 (WSIENFIDME…LGVPDRIVWR (190 aa)). Position 224–230 (224–230 (SGGVDSS)) interacts with ATP.

Homodimer.

It carries out the reaction XMP + L-glutamine + ATP + H2O = GMP + L-glutamate + AMP + diphosphate + 2 H(+). It participates in purine metabolism; GMP biosynthesis; GMP from XMP (L-Gln route): step 1/1. Functionally, catalyzes the synthesis of GMP from XMP. In Oceanobacillus iheyensis (strain DSM 14371 / CIP 107618 / JCM 11309 / KCTC 3954 / HTE831), this protein is GMP synthase [glutamine-hydrolyzing].